The sequence spans 356 residues: GTPase Obg (356 aa).

Positions 1 to 159 constitute an Obg domain; that stretch reads MKFLDQAKVY…RWIWLRLKLI (159 aa). The 169-residue stretch at 160–328 folds into the OBG-type G domain; sequence ADAGLVGLPN…ALYAIAQHLG (169 aa). GTP is bound by residues 166-173, 191-195, 213-216, 280-283, and 309-311; these read GLPNAGKS, FTTLH, DIPG, NKID, and SGV. Residues serine 173 and threonine 193 each contribute to the Mg(2+) site. The disordered stretch occupies residues 333–356; the sequence is DIPLPKPSNADEEDPDTDQPWSPV.

The protein belongs to the TRAFAC class OBG-HflX-like GTPase superfamily. OBG GTPase family. As to quaternary structure, monomer. Mg(2+) is required as a cofactor.

It localises to the cytoplasm. In terms of biological role, an essential GTPase which binds GTP, GDP and possibly (p)ppGpp with moderate affinity, with high nucleotide exchange rates and a fairly low GTP hydrolysis rate. Plays a role in control of the cell cycle, stress response, ribosome biogenesis and in those bacteria that undergo differentiation, in morphogenesis control. This chain is GTPase Obg, found in Hyphomonas neptunium (strain ATCC 15444).